The sequence spans 262 residues: Acyl-[acyl-carrier-protein]--UDP-N-acetylglucosamine O-acyltransferase (262 aa).

It belongs to the transferase hexapeptide repeat family. LpxA subfamily. As to quaternary structure, homotrimer.

Its subcellular location is the cytoplasm. It carries out the reaction a (3R)-hydroxyacyl-[ACP] + UDP-N-acetyl-alpha-D-glucosamine = a UDP-3-O-[(3R)-3-hydroxyacyl]-N-acetyl-alpha-D-glucosamine + holo-[ACP]. It functions in the pathway glycolipid biosynthesis; lipid IV(A) biosynthesis; lipid IV(A) from (3R)-3-hydroxytetradecanoyl-[acyl-carrier-protein] and UDP-N-acetyl-alpha-D-glucosamine: step 1/6. Its function is as follows. Involved in the biosynthesis of lipid A, a phosphorylated glycolipid that anchors the lipopolysaccharide to the outer membrane of the cell. This chain is Acyl-[acyl-carrier-protein]--UDP-N-acetylglucosamine O-acyltransferase, found in Haemophilus influenzae (strain ATCC 51907 / DSM 11121 / KW20 / Rd).